The primary structure comprises 129 residues: Cytochrome c oxidase subunit 13, mitochondrial (129 aa).

A mitochondrion-targeting transit peptide spans Met-1–Tyr-9. At Ala-10–His-43 the chain is on the mitochondrial matrix side. Residues Ala-44–Tyr-71 form a helical membrane-spanning segment. The Mitochondrial intermembrane portion of the chain corresponds to Phe-72–Asp-129.

Belongs to the cytochrome c oxidase subunit 6A family. In terms of assembly, component of the cytochrome c oxidase (complex IV, CIV), a multisubunit enzyme composed of 12 subunits. The complex is composed of a catalytic core of 3 subunits COX1, COX2 and COX3, encoded in the mitochondrial DNA, and 9 supernumerary subunits COX4, COX5A (or COX5B), COX6, COX7, COX8, COX9, COX12, COX13 and COX26, which are encoded in the nuclear genome. The complex exists as a monomer or a dimer and forms supercomplexes (SCs) in the inner mitochondrial membrane with a dimer of ubiquinol-cytochrome c oxidoreductase (cytochrome b-c1 complex, complex III, CIII), resulting in 2 different assemblies (supercomplexes III(2)IV and III(2)IV(2)). COX13 interacts with COX1 and COX3 on the intermembrane space (IMS) and COX4 on the matrix side.

The protein resides in the mitochondrion inner membrane. It participates in energy metabolism; oxidative phosphorylation. In terms of biological role, component of the cytochrome c oxidase, the last enzyme in the mitochondrial electron transport chain which drives oxidative phosphorylation. The respiratory chain contains 3 multisubunit complexes succinate dehydrogenase (complex II, CII), ubiquinol-cytochrome c oxidoreductase (cytochrome b-c1 complex, complex III, CIII) and cytochrome c oxidase (complex IV, CIV), that cooperate to transfer electrons derived from NADH and succinate to molecular oxygen, creating an electrochemical gradient over the inner membrane that drives transmembrane transport and the ATP synthase. Cytochrome c oxidase is the component of the respiratory chain that catalyzes the reduction of oxygen to water. Electrons originating from reduced cytochrome c in the intermembrane space (IMS) are transferred via the dinuclear copper A center (CU(A)) of COX2 and heme A of COX1 to the active site in COX1, a binuclear center (BNC) formed by heme A3 and copper B (CU(B)). The BNC reduces molecular oxygen to 2 water molecules using 4 electrons from cytochrome c in the IMS and 4 protons from the mitochondrial matrix. This is Cytochrome c oxidase subunit 13, mitochondrial (COX13) from Saccharomyces cerevisiae (strain ATCC 204508 / S288c) (Baker's yeast).